The primary structure comprises 155 residues: 6,7-dimethyl-8-ribityllumazine synthase (155 aa).

5-amino-6-(D-ribitylamino)uracil-binding positions include F24, 58–60 (AFE), and 82–84 (VII). 87–88 (ST) contributes to the (2S)-2-hydroxy-3-oxobutyl phosphate binding site. Residue H90 is the Proton donor of the active site. F115 provides a ligand contact to 5-amino-6-(D-ribitylamino)uracil. Position 129 (R129) interacts with (2S)-2-hydroxy-3-oxobutyl phosphate.

This sequence belongs to the DMRL synthase family.

It carries out the reaction (2S)-2-hydroxy-3-oxobutyl phosphate + 5-amino-6-(D-ribitylamino)uracil = 6,7-dimethyl-8-(1-D-ribityl)lumazine + phosphate + 2 H2O + H(+). Its pathway is cofactor biosynthesis; riboflavin biosynthesis; riboflavin from 2-hydroxy-3-oxobutyl phosphate and 5-amino-6-(D-ribitylamino)uracil: step 1/2. In terms of biological role, catalyzes the formation of 6,7-dimethyl-8-ribityllumazine by condensation of 5-amino-6-(D-ribitylamino)uracil with 3,4-dihydroxy-2-butanone 4-phosphate. This is the penultimate step in the biosynthesis of riboflavin. The protein is 6,7-dimethyl-8-ribityllumazine synthase of Chlorobaculum tepidum (strain ATCC 49652 / DSM 12025 / NBRC 103806 / TLS) (Chlorobium tepidum).